The following is a 159-amino-acid chain: Cyclic pyranopterin monophosphate synthase (159 aa).

Residues 76–78 and 114–115 each bind substrate; these read LCH and ME. The active site involves aspartate 129.

The protein belongs to the MoaC family. As to quaternary structure, homohexamer; trimer of dimers.

The catalysed reaction is (8S)-3',8-cyclo-7,8-dihydroguanosine 5'-triphosphate = cyclic pyranopterin phosphate + diphosphate. The protein operates within cofactor biosynthesis; molybdopterin biosynthesis. Catalyzes the conversion of (8S)-3',8-cyclo-7,8-dihydroguanosine 5'-triphosphate to cyclic pyranopterin monophosphate (cPMP). The protein is Cyclic pyranopterin monophosphate synthase of Clostridium botulinum (strain Alaska E43 / Type E3).